A 300-amino-acid chain; its full sequence is UDP-N-acetylenolpyruvoylglucosamine reductase (300 aa).

One can recognise an FAD-binding PCMH-type domain in the interval 30-194 (KVGGPADFFA…LAAVFSLAAG (165 aa)). Arg174 is an active-site residue. The Proton donor role is filled by Ser223. Glu293 is a catalytic residue.

This sequence belongs to the MurB family. FAD serves as cofactor.

It localises to the cytoplasm. It carries out the reaction UDP-N-acetyl-alpha-D-muramate + NADP(+) = UDP-N-acetyl-3-O-(1-carboxyvinyl)-alpha-D-glucosamine + NADPH + H(+). It functions in the pathway cell wall biogenesis; peptidoglycan biosynthesis. Cell wall formation. This chain is UDP-N-acetylenolpyruvoylglucosamine reductase, found in Geotalea uraniireducens (strain Rf4) (Geobacter uraniireducens).